Here is a 304-residue protein sequence, read N- to C-terminus: Non-specific ribonucleoside hydrolase RihC (304 aa).

The active site involves histidine 233.

It belongs to the IUNH family. RihC subfamily.

Its function is as follows. Hydrolyzes both purine and pyrimidine ribonucleosides with a broad-substrate specificity. The chain is Non-specific ribonucleoside hydrolase RihC from Escherichia coli (strain SMS-3-5 / SECEC).